A 179-amino-acid chain; its full sequence is Ribosome maturation factor RimM (179 aa).

The 78-residue stretch at 102 to 179 folds into the PRC barrel domain; that stretch reads DGEYYWYQLE…EMKVDWDADF (78 aa).

It belongs to the RimM family. As to quaternary structure, binds ribosomal protein uS19.

The protein localises to the cytoplasm. Its function is as follows. An accessory protein needed during the final step in the assembly of 30S ribosomal subunit, possibly for assembly of the head region. Essential for efficient processing of 16S rRNA. May be needed both before and after RbfA during the maturation of 16S rRNA. It has affinity for free ribosomal 30S subunits but not for 70S ribosomes. The chain is Ribosome maturation factor RimM from Pseudomonas savastanoi pv. phaseolicola (strain 1448A / Race 6) (Pseudomonas syringae pv. phaseolicola (strain 1448A / Race 6)).